The primary structure comprises 132 residues: Auxin-responsive protein SAUR72 (132 aa).

The interval Ser22–His54 is disordered. A compositionally biased stretch (basic and acidic residues) spans Asp23 to Ser33.

It belongs to the ARG7 family. Interacts with and inhibits PP2C-D subfamily of type 2C phosphatases such as PP2C67/PP2C-D1. In terms of tissue distribution, highly expressed in the steles of roots and hypocotyls.

The protein resides in the cytoplasm. Its function is as follows. Provide a mechanistic link between auxin and plasma membrane H(+)-ATPases (PM H(+)-ATPases, e.g. AHA1 and AHA2), and triggers PM H(+)-ATPases activity by promoting phosphorylation of their C-terminal autoinhibitory domain as a result of PP2C-D subfamily of type 2C phosphatases inhibition, thus leading to the acidification of the apoplast and the facilitation of solutes and water uptake to drive cell expansion. Plays a role in the regulation of cell expansion, root meristem patterning and auxin transport. In Arabidopsis thaliana (Mouse-ear cress), this protein is Auxin-responsive protein SAUR72.